Consider the following 138-residue polypeptide: Phosphoribosyl-AMP cyclohydrolase (138 aa).

D84 contacts Mg(2+). C85 contributes to the Zn(2+) binding site. 2 residues coordinate Mg(2+): D86 and D88. The Zn(2+) site is built by C102 and C109.

The protein belongs to the PRA-CH family. In terms of assembly, homodimer. Requires Mg(2+) as cofactor. Zn(2+) is required as a cofactor.

It is found in the cytoplasm. It carries out the reaction 1-(5-phospho-beta-D-ribosyl)-5'-AMP + H2O = 1-(5-phospho-beta-D-ribosyl)-5-[(5-phospho-beta-D-ribosylamino)methylideneamino]imidazole-4-carboxamide. It participates in amino-acid biosynthesis; L-histidine biosynthesis; L-histidine from 5-phospho-alpha-D-ribose 1-diphosphate: step 3/9. Functionally, catalyzes the hydrolysis of the adenine ring of phosphoribosyl-AMP. This chain is Phosphoribosyl-AMP cyclohydrolase, found in Burkholderia lata (strain ATCC 17760 / DSM 23089 / LMG 22485 / NCIMB 9086 / R18194 / 383).